Reading from the N-terminus, the 211-residue chain is Histidine biosynthesis bifunctional protein HisIE (211 aa).

The phosphoribosyl-AMP cyclohydrolase stretch occupies residues 1–107; that stretch reads MNKLIDFSKG…FNSEIESRFK (107 aa). Residues 108 to 211 are phosphoribosyl-ATP pyrophosphohydrolase; it reads IQALAQTIHQ…KGERKEVREW (104 aa).

This sequence in the N-terminal section; belongs to the PRA-CH family. It in the C-terminal section; belongs to the PRA-PH family.

The protein resides in the cytoplasm. The catalysed reaction is 1-(5-phospho-beta-D-ribosyl)-ATP + H2O = 1-(5-phospho-beta-D-ribosyl)-5'-AMP + diphosphate + H(+). It carries out the reaction 1-(5-phospho-beta-D-ribosyl)-5'-AMP + H2O = 1-(5-phospho-beta-D-ribosyl)-5-[(5-phospho-beta-D-ribosylamino)methylideneamino]imidazole-4-carboxamide. The protein operates within amino-acid biosynthesis; L-histidine biosynthesis; L-histidine from 5-phospho-alpha-D-ribose 1-diphosphate: step 2/9. It participates in amino-acid biosynthesis; L-histidine biosynthesis; L-histidine from 5-phospho-alpha-D-ribose 1-diphosphate: step 3/9. In Staphylococcus epidermidis (strain ATCC 35984 / DSM 28319 / BCRC 17069 / CCUG 31568 / BM 3577 / RP62A), this protein is Histidine biosynthesis bifunctional protein HisIE.